The chain runs to 185 residues: Kappa-casein (185 aa).

A signal peptide spans 1 to 20; it reads MKSFFLVVNILALTLPFLGA. Residue Thr-143 is glycosylated (O-linked (GalNAc...) threonine). Phosphoserine; alternate is present on Ser-161. Residue Ser-161 is glycosylated (O-linked (GalNAc...) serine; alternate). Thr-178 carries O-linked (GalNAc...) threonine glycosylation. A Phosphoserine modification is found at Ser-179.

The protein belongs to the kappa-casein family. As to expression, mammary gland specific. Secreted in milk.

The protein localises to the secreted. Its function is as follows. Kappa-casein stabilizes micelle formation, preventing casein precipitation in milk. This chain is Kappa-casein (CSN3), found in Equus caballus (Horse).